We begin with the raw amino-acid sequence, 326 residues long: 4-hydroxythreonine-4-phosphate dehydrogenase (326 aa).

Residue Thr-132 coordinates substrate. 3 residues coordinate a divalent metal cation: His-160, His-205, and His-260. Residues Lys-268, Asn-277, and Arg-286 each contribute to the substrate site.

The protein belongs to the PdxA family. In terms of assembly, homodimer. Requires Zn(2+) as cofactor. Mg(2+) serves as cofactor. Co(2+) is required as a cofactor.

It localises to the cytoplasm. It catalyses the reaction 4-(phosphooxy)-L-threonine + NAD(+) = 3-amino-2-oxopropyl phosphate + CO2 + NADH. It participates in cofactor biosynthesis; pyridoxine 5'-phosphate biosynthesis; pyridoxine 5'-phosphate from D-erythrose 4-phosphate: step 4/5. In terms of biological role, catalyzes the NAD(P)-dependent oxidation of 4-(phosphooxy)-L-threonine (HTP) into 2-amino-3-oxo-4-(phosphooxy)butyric acid which spontaneously decarboxylates to form 3-amino-2-oxopropyl phosphate (AHAP). In Stenotrophomonas maltophilia (strain K279a), this protein is 4-hydroxythreonine-4-phosphate dehydrogenase.